Here is a 114-residue protein sequence, read N- to C-terminus: UPF0342 protein NWMN_1737 (114 aa).

It belongs to the UPF0342 family.

The chain is UPF0342 protein NWMN_1737 from Staphylococcus aureus (strain Newman).